The primary structure comprises 160 residues: Nucleotide-binding protein VP1617 (160 aa).

The protein belongs to the YajQ family.

Functionally, nucleotide-binding protein. The polypeptide is Nucleotide-binding protein VP1617 (Vibrio parahaemolyticus serotype O3:K6 (strain RIMD 2210633)).